The following is a 71-amino-acid chain: Exodeoxyribonuclease 7 small subunit (71 aa).

Belongs to the XseB family. Heterooligomer composed of large and small subunits.

The protein localises to the cytoplasm. It carries out the reaction Exonucleolytic cleavage in either 5'- to 3'- or 3'- to 5'-direction to yield nucleoside 5'-phosphates.. In terms of biological role, bidirectionally degrades single-stranded DNA into large acid-insoluble oligonucleotides, which are then degraded further into small acid-soluble oligonucleotides. The polypeptide is Exodeoxyribonuclease 7 small subunit (Endomicrobium trichonymphae).